The following is a 101-amino-acid chain: Small ribosomal subunit protein uS14 (101 aa).

The protein belongs to the universal ribosomal protein uS14 family. Part of the 30S ribosomal subunit. Contacts proteins S3 and S10.

Its function is as follows. Binds 16S rRNA, required for the assembly of 30S particles and may also be responsible for determining the conformation of the 16S rRNA at the A site. This Pseudoalteromonas translucida (strain TAC 125) protein is Small ribosomal subunit protein uS14.